The chain runs to 104 residues: Urease subunit gamma (104 aa).

The protein belongs to the urease gamma subunit family. As to quaternary structure, heterotrimer of UreA (gamma), UreB (beta) and UreC (alpha) subunits. Three heterotrimers associate to form the active enzyme.

The protein resides in the cytoplasm. The catalysed reaction is urea + 2 H2O + H(+) = hydrogencarbonate + 2 NH4(+). The protein operates within nitrogen metabolism; urea degradation; CO(2) and NH(3) from urea (urease route): step 1/1. The chain is Urease subunit gamma from Actinomyces naeslundii.